The following is a 239-amino-acid chain: Orotidine 5'-phosphate decarboxylase (239 aa).

Substrate-binding positions include Asp11, Lys33, 60-69 (DLKFHDIPTT), Thr117, Arg178, Gln187, Gly207, and Arg208. Lys62 functions as the Proton donor in the catalytic mechanism.

It belongs to the OMP decarboxylase family. Type 1 subfamily. As to quaternary structure, homodimer.

It carries out the reaction orotidine 5'-phosphate + H(+) = UMP + CO2. It participates in pyrimidine metabolism; UMP biosynthesis via de novo pathway; UMP from orotate: step 2/2. Catalyzes the decarboxylation of orotidine 5'-monophosphate (OMP) to uridine 5'-monophosphate (UMP). The polypeptide is Orotidine 5'-phosphate decarboxylase (Nitrosospira multiformis (strain ATCC 25196 / NCIMB 11849 / C 71)).